Reading from the N-terminus, the 339-residue chain is MNTRFLDACWGKPVDRTPVWLMRQAGRYLPDYMRVRSKCTFLELCKTPELAAEVSIQPVDILGVDAAILFSDILTPVEPMGMALDFVPGPVFEHPIRTMADVEKLRIPQMEQDVPYVLETIKILRRELANKVPLIGFGGAPFTLACYMVEGKGSKDWATMKRMMYAAPEVYAALMEKVTMMDMEYLNAQIKAGAQAIQIFDTWGGVLAPSDYEKYVLPYTTKLINGLNRQNVPVIHFVKGAGTMLDSVKRAGGDVMGLDWHINLGKAREVLGDMAVQGNLDPTVLFAPKDVIEQEVKRVLDENAGKPGHIFNLGHGILPTVPPENAIHMVECVHRLSQK.

Substrate is bound by residues 23 to 27, D72, Y147, T202, and H315; that span reads RQAGR.

This sequence belongs to the uroporphyrinogen decarboxylase family. Homodimer.

Its subcellular location is the cytoplasm. It catalyses the reaction uroporphyrinogen III + 4 H(+) = coproporphyrinogen III + 4 CO2. It participates in porphyrin-containing compound metabolism; protoporphyrin-IX biosynthesis; coproporphyrinogen-III from 5-aminolevulinate: step 4/4. Its function is as follows. Catalyzes the decarboxylation of four acetate groups of uroporphyrinogen-III to yield coproporphyrinogen-III. The polypeptide is Uroporphyrinogen decarboxylase (Geotalea uraniireducens (strain Rf4) (Geobacter uraniireducens)).